The primary structure comprises 238 residues: NEDD4-binding protein 2-like 1 (238 aa).

2 disordered regions span residues 1–36 and 183–212; these read MEDS…PRRH and VLHA…WNTY. Positions 20-31 are enriched in pro residues; the sequence is QPPPRPPPARGP. The span at 192-212 shows a compositional bias: polar residues; it reads ANRNQGRNSEPSSGSGYWNTY.

Interacts with dynactin subunit proteins, including DCTN4, DCTN5 and DCTN5.

Functionally, might play a role in adipocyte differentiation and triglyceride accumulation. The protein is NEDD4-binding protein 2-like 1 (N4bp2l1) of Mus musculus (Mouse).